The following is a 122-amino-acid chain: NADH-quinone oxidoreductase subunit A (122 aa).

A run of 3 helical transmembrane segments spans residues L10–G30, F67–V87, and L91–I111.

Belongs to the complex I subunit 3 family. NDH-1 is composed of 14 different subunits. Subunits NuoA, H, J, K, L, M, N constitute the membrane sector of the complex.

It is found in the cell membrane. It carries out the reaction a quinone + NADH + 5 H(+)(in) = a quinol + NAD(+) + 4 H(+)(out). NDH-1 shuttles electrons from NADH, via FMN and iron-sulfur (Fe-S) centers, to quinones in the respiratory chain. The immediate electron acceptor for the enzyme in this species is believed to be a menaquinone. Couples the redox reaction to proton translocation (for every two electrons transferred, four hydrogen ions are translocated across the cytoplasmic membrane), and thus conserves the redox energy in a proton gradient. In Geobacillus thermodenitrificans (strain NG80-2), this protein is NADH-quinone oxidoreductase subunit A.